The sequence spans 380 residues: Cytochrome b (380 aa).

The next 4 membrane-spanning stretches (helical) occupy residues 34-54, 78-99, 114-134, and 179-199; these read FGSLLALCLMTQILTGLLLAM, WLIRNMHANGASFFFICIYLHI, WNTGVLLLLTLMATAFVGYVL, and FFALHFLLPFMIAGLTLIHLT. Residues His-84 and His-98 each coordinate heme b. Residues His-183 and His-197 each contribute to the heme b site. His-202 is a binding site for a ubiquinone. Transmembrane regions (helical) follow at residues 227–247, 289–309, 321–341, and 348–368; these read LKDILGLALLLLPLTTMALFS, LGGVLALAASVLVLFLSPLLH, LSQLLFWALVANLLILTWIGS, and FIIIGQLASTTYFIILLILFP.

This sequence belongs to the cytochrome b family. The cytochrome bc1 complex contains 11 subunits: 3 respiratory subunits (MT-CYB, CYC1 and UQCRFS1), 2 core proteins (UQCRC1 and UQCRC2) and 6 low-molecular weight proteins (UQCRH/QCR6, UQCRB/QCR7, UQCRQ/QCR8, UQCR10/QCR9, UQCR11/QCR10 and a cleavage product of UQCRFS1). This cytochrome bc1 complex then forms a dimer. Heme b is required as a cofactor.

The protein localises to the mitochondrion inner membrane. In terms of biological role, component of the ubiquinol-cytochrome c reductase complex (complex III or cytochrome b-c1 complex) that is part of the mitochondrial respiratory chain. The b-c1 complex mediates electron transfer from ubiquinol to cytochrome c. Contributes to the generation of a proton gradient across the mitochondrial membrane that is then used for ATP synthesis. This is Cytochrome b (MT-CYB) from Oceanodroma microsoma (Least storm petrel).